The sequence spans 64 residues: Alpha-conotoxin-like Lp1.8 (64 aa).

The first 21 residues, 1–21 (MGMRMMFTMFLLVVLTTTVVS), serve as a signal peptide directing secretion. Residues 22 to 41 (FNSDRESNHENRRTSNQITR) constitute a propeptide that is removed on maturation. 2 disulfides stabilise this stretch: Cys-47–Cys-53 and Cys-48–Cys-61. Residues 49 to 51 (KDP) are lacks the Ser-Xaa-Pro motif that is crucial for potent interaction with nAChR.

Belongs to the conotoxin A superfamily. Expressed by the venom duct.

It is found in the secreted. Its function is as follows. Alpha-conotoxins act on postsynaptic membranes, they bind to the nicotinic acetylcholine receptors (nAChR) and thus inhibit them. Has possibly a distinct nAChR binding mode from other alpha-conotoxins, due to a different three residue motif (Lys-Xaa-Pro instead of the conserved Ser-Xaa-Pro motif). The polypeptide is Alpha-conotoxin-like Lp1.8 (Conus leopardus (Leopard cone)).